The sequence spans 453 residues: Bifunctional protein GlmU (453 aa).

A pyrophosphorylase region spans residues 1–228 (MPHWAAVIMA…VHEALGINSR (228 aa)). UDP-N-acetyl-alpha-D-glucosamine-binding positions include K23, Q73, 78–79 (GT), 100–102 (SGD), G139, E153, N168, and N226. D102 is a Mg(2+) binding site. N226 contacts Mg(2+). The linker stretch occupies residues 229 to 249 (AQLAAAEDVARQRILSYWMEE). The tract at residues 250-453 (GVTIIDPRST…IENWVRNKKK (204 aa)) is N-acetyltransferase. Residues R331 and K349 each contribute to the UDP-N-acetyl-alpha-D-glucosamine site. The Proton acceptor role is filled by H361. Residues Y364 and N375 each contribute to the UDP-N-acetyl-alpha-D-glucosamine site. Acetyl-CoA-binding positions include A378, 384–385 (NY), S403, A421, and R438.

In the N-terminal section; belongs to the N-acetylglucosamine-1-phosphate uridyltransferase family. This sequence in the C-terminal section; belongs to the transferase hexapeptide repeat family. Homotrimer. The cofactor is Mg(2+).

It is found in the cytoplasm. It catalyses the reaction alpha-D-glucosamine 1-phosphate + acetyl-CoA = N-acetyl-alpha-D-glucosamine 1-phosphate + CoA + H(+). The enzyme catalyses N-acetyl-alpha-D-glucosamine 1-phosphate + UTP + H(+) = UDP-N-acetyl-alpha-D-glucosamine + diphosphate. The protein operates within nucleotide-sugar biosynthesis; UDP-N-acetyl-alpha-D-glucosamine biosynthesis; N-acetyl-alpha-D-glucosamine 1-phosphate from alpha-D-glucosamine 6-phosphate (route II): step 2/2. Its pathway is nucleotide-sugar biosynthesis; UDP-N-acetyl-alpha-D-glucosamine biosynthesis; UDP-N-acetyl-alpha-D-glucosamine from N-acetyl-alpha-D-glucosamine 1-phosphate: step 1/1. It functions in the pathway bacterial outer membrane biogenesis; LPS lipid A biosynthesis. Catalyzes the last two sequential reactions in the de novo biosynthetic pathway for UDP-N-acetylglucosamine (UDP-GlcNAc). The C-terminal domain catalyzes the transfer of acetyl group from acetyl coenzyme A to glucosamine-1-phosphate (GlcN-1-P) to produce N-acetylglucosamine-1-phosphate (GlcNAc-1-P), which is converted into UDP-GlcNAc by the transfer of uridine 5-monophosphate (from uridine 5-triphosphate), a reaction catalyzed by the N-terminal domain. The chain is Bifunctional protein GlmU from Desulfitobacterium hafniense (strain DSM 10664 / DCB-2).